The following is a 194-amino-acid chain: GTP cyclohydrolase 1 (194 aa).

Cysteine 83, histidine 86, and cysteine 155 together coordinate Zn(2+).

The protein belongs to the GTP cyclohydrolase I family. As to quaternary structure, toroid-shaped homodecamer, composed of two pentamers of five dimers.

It carries out the reaction GTP + H2O = 7,8-dihydroneopterin 3'-triphosphate + formate + H(+). It participates in cofactor biosynthesis; 7,8-dihydroneopterin triphosphate biosynthesis; 7,8-dihydroneopterin triphosphate from GTP: step 1/1. In Streptococcus pyogenes serotype M3 (strain ATCC BAA-595 / MGAS315), this protein is GTP cyclohydrolase 1.